Reading from the N-terminus, the 375-residue chain is tRNA-specific 2-thiouridylase MnmA (375 aa).

ATP-binding positions include 12–19 (GMSGGVDS) and M38. The interval 98–100 (NPD) is interaction with target base in tRNA. The active-site Nucleophile is the C103. A disulfide bridge connects residues C103 and C200. G127 is an ATP binding site. Positions 150 to 152 (KDQ) are interaction with tRNA. Residue C200 is the Cysteine persulfide intermediate of the active site. The segment at 312 to 313 (RY) is interaction with tRNA.

It belongs to the MnmA/TRMU family.

The protein resides in the cytoplasm. It carries out the reaction S-sulfanyl-L-cysteinyl-[protein] + uridine(34) in tRNA + AH2 + ATP = 2-thiouridine(34) in tRNA + L-cysteinyl-[protein] + A + AMP + diphosphate + H(+). Catalyzes the 2-thiolation of uridine at the wobble position (U34) of tRNA, leading to the formation of s(2)U34. The polypeptide is tRNA-specific 2-thiouridylase MnmA (Lactobacillus delbrueckii subsp. bulgaricus (strain ATCC 11842 / DSM 20081 / BCRC 10696 / JCM 1002 / NBRC 13953 / NCIMB 11778 / NCTC 12712 / WDCM 00102 / Lb 14)).